The primary structure comprises 138 residues: Odorant-binding protein 22 (138 aa).

An N-terminal signal peptide occupies residues 1 to 16 (MKVFIAVFALIAVAAA). Arg30 contributes to the (5Z,8Z,11Z,14Z)-eicosatetraenoate binding site. (9Z)-hexadecenoate contacts are provided by Arg30 and Tyr61. Residues Arg30 and Tyr61 each contribute to the (9Z,12Z)-octadecadienoate site. Disulfide bonds link Cys33-Cys64, Cys60-Cys113, and Cys103-Cys122. The N-linked (GlcNAc...) asparagine glycan is linked to Asn127.

It belongs to the PBP/GOBP family. Monomer in solution. As to expression, high-level expression in female mouth parts, particularly in the proboscis (at protein level). Moderate-level expression in female antenna (at protein level). Expressed in testis but not in the accessory gland or ejaculatory duct (at protein level). Expressed in spermathecae (at protein level). Female salivary gland. Female chemosensory organs: antenna, palp and proboscis. Not detected in midgut.

The protein resides in the secreted. Functionally, involved in modulation of blood-feeding behavior and capacity in female mosquitoes. Required for normal oviposition. Required for normal fecundity and fertility of female and male mosquitoes. Required for normal expression of VGA1 gene, which encodes the egg yolk protein vitellogenin-A1. Involved in regulation of spermatozoa development. Required for normal female longevity when mosquitoes are maintained on regular sugar meal. Binds long chain fatty acids. In terms of biological role, (Microbial infection) Facilitates shedding of dengue virus type 2 particles into mosquito saliva. Does not affect dengue virus type 2 replication or infection prevalence in midgut and salivary glands at 14 days after blood feeding. Its function is as follows. (Microbial infection) Facilitates shedding of Zika virus particles into mosquito saliva. Does not affect Zika virus replication or infection prevalence in midgut and salivary glands at 14 days after blood feeding. The sequence is that of Odorant-binding protein 22 from Aedes aegypti (Yellowfever mosquito).